Reading from the N-terminus, the 239-residue chain is 2-C-methyl-D-erythritol 4-phosphate cytidylyltransferase (239 aa).

The protein belongs to the IspD/TarI cytidylyltransferase family. IspD subfamily. Homodimer.

The catalysed reaction is 2-C-methyl-D-erythritol 4-phosphate + CTP + H(+) = 4-CDP-2-C-methyl-D-erythritol + diphosphate. Its pathway is isoprenoid biosynthesis; isopentenyl diphosphate biosynthesis via DXP pathway; isopentenyl diphosphate from 1-deoxy-D-xylulose 5-phosphate: step 2/6. In terms of biological role, catalyzes the formation of 4-diphosphocytidyl-2-C-methyl-D-erythritol from CTP and 2-C-methyl-D-erythritol 4-phosphate (MEP). This chain is 2-C-methyl-D-erythritol 4-phosphate cytidylyltransferase, found in Sodalis glossinidius (strain morsitans).